We begin with the raw amino-acid sequence, 633 residues long: MKTGRTRPLRVFDILVPPWPPTVPHRIKLPRGKTNWFEFYSAITRNWNKLKGLKNCWQIWKDVQEIIRRIRKYQGESTVMQGPGNNDGAHPYATMAGKLDSKLLQALKVMEFEYMTPVQHRVLTELPSWRSDCLVQAKTGTGKTLAFLLPTLHCLLQGHSAPPRGQVAILIITPTRELAQQIAKSCDQLTSQLARPLECHIAVGGTARASALARFMKGAPSILVATPGRLKDYLSEPSTAEKLSNIQTLILDEADTMLESGFLADVKRILQLIPPKSTGWQGMCFSATVPPKVKDVVSVVLKPGYTSISTIEKNETPTHERVPQYHVLIPSVADTFTTLASLLNLEIKNSSKIIVFGVTANMVALFAAAFSQGLTPLKVFEIHSRLSQSARTKTTALFKEAATGIMFASDVIGRGMDFPNVDLVIQVGLPSNGEQYVHRVGRTARAGNDGRAIILLTEAESFFMKVNRHLPIQPHPQTDAINAGASSCADAVTKAMYSIGEETKQRAYSSYIGFFAGSGLLKQVRLDKPGLVQLANELAIQGMGCPEPPPMDKKVVGKMGLKGVPGFNYATGNDLNGDRPARPRGRPGNKTRDVLSPGAGQGDRRGSVSKNRGGRRGGGRGGRGGRGGKPRAA.

The transit peptide at 1–32 directs the protein to the mitochondrion; sequence MKTGRTRPLRVFDILVPPWPPTVPHRIKLPRG. Positions 38–66 match the Q motif motif; that stretch reads EFYSAITRNWNKLKGLKNCWQIWKDVQEI. The 179-residue stretch at 70–248 folds into the Helicase ATP-binding domain; the sequence is IRKYQGESTV…TAEKLSNIQT (179 aa). Position 83–90 (83–90) interacts with ATP; it reads PGNNDGAH. Positions 195–198 match the DEAD box motif; that stretch reads RPLE. Residues 262 to 429 form the Helicase C-terminal domain; it reads FLADVKRILQ…NVDLVIQVGL (168 aa). The interval 567 to 633 is disordered; that stretch reads FNYATGNDLN…GGRGGKPRAA (67 aa).

This sequence belongs to the DEAD box helicase family. DDX18/HAS1 subfamily.

Its subcellular location is the mitochondrion matrix. The enzyme catalyses ATP + H2O = ADP + phosphate + H(+). Functionally, ATP-dependent RNA helicase required for mitochondrial splicing of group I and II introns. Also required for efficient mitochondrial translation. This is ATP-dependent RNA helicase mss116, mitochondrial (mss116) from Aspergillus oryzae (strain ATCC 42149 / RIB 40) (Yellow koji mold).